The primary structure comprises 200 residues: Ubiquitin-conjugating enzyme E2 K (200 aa).

Alanine 2 carries the N-acetylalanine modification. The UBC core domain maps to 4 to 154 (IAVQRIKREF…ARLWAHVYAG (151 aa)). Lysine 14 is subject to N6-acetyllysine; alternate. Residue lysine 14 forms a Glycyl lysine isopeptide (Lys-Gly) (interchain with G-Cter in SUMO); alternate linkage. Lysine 14 is covalently cross-linked (Glycyl lysine isopeptide (Lys-Gly) (interchain with G-Cter in SUMO1); alternate). Catalysis depends on cysteine 92, which acts as the Glycyl thioester intermediate. Serine 159 carries the phosphoserine modification. Residues 160-200 (PEYTKKIENLCAMGFDRNAVIVALSSKSWDVETATELLLSN) form the UBA domain.

This sequence belongs to the ubiquitin-conjugating enzyme family. Interacts with RNF138/NARF. Interacts with BRCA1. Post-translationally, sumoylation at Lys-14 impairs catalytic activity.

It is found in the cytoplasm. It catalyses the reaction S-ubiquitinyl-[E1 ubiquitin-activating enzyme]-L-cysteine + [E2 ubiquitin-conjugating enzyme]-L-cysteine = [E1 ubiquitin-activating enzyme]-L-cysteine + S-ubiquitinyl-[E2 ubiquitin-conjugating enzyme]-L-cysteine.. Its pathway is protein modification; protein ubiquitination. Accepts ubiquitin from the E1 complex and catalyzes its covalent attachment to other proteins. In vitro, in the presence or in the absence of BRCA1-BARD1 E3 ubiquitin-protein ligase complex, catalyzes the synthesis of 'Lys-48'-linked polyubiquitin chains. Does not transfer ubiquitin directly to but elongates monoubiquitinated substrate protein. Mediates the selective degradation of short-lived and abnormal proteins, such as the endoplasmic reticulum-associated degradation (ERAD) of misfolded lumenal proteins. Ubiquitinates huntingtin. May mediate foam cell formation by the suppression of apoptosis of lipid-bearing macrophages through ubiquitination and subsequence degradation of p53/TP53. Proposed to be involved in ubiquitination and proteolytic processing of NF-kappa-B; in vitro supports ubiquitination of NFKB1. In Bos taurus (Bovine), this protein is Ubiquitin-conjugating enzyme E2 K (UBE2K).